The following is a 129-amino-acid chain: Protein Wnt-6 (129 aa).

5 disulfides stabilise this stretch: C3/C17, C5/C12, C75/C106, C91/C101, and C128/C129. S9 carries the O-palmitoleoyl serine; by PORCN lipid modification. Residue N92 is glycosylated (N-linked (GlcNAc...) asparagine).

Belongs to the Wnt family. Palmitoleoylation is required for efficient binding to frizzled receptors. Depalmitoleoylation leads to Wnt signaling pathway inhibition. In terms of tissue distribution, at tailbud: dorsal, punctate; in adult: brain and heart.

It localises to the secreted. It is found in the extracellular space. Its subcellular location is the extracellular matrix. Its function is as follows. Ligand for members of the frizzled family of seven transmembrane receptors. Probable developmental protein. May be a signaling molecule which affects the development of discrete regions of tissues. Is likely to signal over only few cell diameters. This is Protein Wnt-6 (wnt6) from Xenopus laevis (African clawed frog).